We begin with the raw amino-acid sequence, 345 residues long: Fibronectin type 3 and ankyrin repeat domains protein 1 (345 aa).

The Fibronectin type-III domain occupies 8–108 (PPSKPHPPVV…LVSVSTTREP (101 aa)). ANK repeat units lie at residues 109–139 (ISSEHLHRAVSVNDEDLLVRILQGGRVKVDV), 143–172 (FGFTALMVAAQKGYTRLVKILVSNGTDVNL), 176–205 (SGKDSLMLACYAGHLDVVKYLRRHGASWQA), 209–238 (GGCTALHWAADGGHCSVIEWMIKDGCEVDV), 243–273 (SGWTPLMRVSAVSGNQRVASLLIDAGANVNV), and 277–306 (NGKTPLMVAVLNNHEELVQLLLDKGADASV).

In terms of assembly, interacts with COPS5; regulates the phosphorylation of JUN and the transcriptional activity of AP-1. Interacts with RYBP; may prevent the ubiquitin-mediated proteasomal degradation of FANK1. In terms of processing, polyubiquitinated. Polyubiquitination leads to proteasomal degradation. Mostly restricted to testis.

The protein localises to the nucleus. Its subcellular location is the cytoplasm. It localises to the cytosol. The protein resides in the cytoskeleton. It is found in the cilium basal body. The protein localises to the cell projection. Its subcellular location is the cilium. Functionally, through the activation of JUN and AP-1-mediated transcription, may regulate apoptosis. The sequence is that of Fibronectin type 3 and ankyrin repeat domains protein 1 from Homo sapiens (Human).